The primary structure comprises 206 residues: Putative 3-methyladenine DNA glycosylase (206 aa).

Belongs to the DNA glycosylase MPG family.

This Rhodopseudomonas palustris (strain ATCC BAA-98 / CGA009) protein is Putative 3-methyladenine DNA glycosylase.